A 446-amino-acid polypeptide reads, in one-letter code: Adenylosuccinate synthetase (446 aa).

GTP-binding positions include 20 to 26 (GDEGKGK) and 48 to 50 (GHT). Residue D21 is the Proton acceptor of the active site. Mg(2+) contacts are provided by D21 and G48. IMP-binding positions include 21-24 (DEGK), 46-49 (NAGH), T137, R151, Q232, T247, and R319. H49 serves as the catalytic Proton donor. Residue 315 to 321 (SVTGRPR) participates in substrate binding. GTP is bound by residues R321, 347–349 (KLD), and 429–431 (STG).

The protein belongs to the adenylosuccinate synthetase family. Homodimer. It depends on Mg(2+) as a cofactor.

It is found in the cytoplasm. It catalyses the reaction IMP + L-aspartate + GTP = N(6)-(1,2-dicarboxyethyl)-AMP + GDP + phosphate + 2 H(+). It participates in purine metabolism; AMP biosynthesis via de novo pathway; AMP from IMP: step 1/2. Functionally, plays an important role in the de novo pathway of purine nucleotide biosynthesis. Catalyzes the first committed step in the biosynthesis of AMP from IMP. The chain is Adenylosuccinate synthetase from Ralstonia nicotianae (strain ATCC BAA-1114 / GMI1000) (Ralstonia solanacearum).